Here is a 362-residue protein sequence, read N- to C-terminus: S-adenosylmethionine decarboxylase proenzyme (362 aa).

Active-site residues include glutamate 11 and glutamate 14. Serine 71 functions as the Schiff-base intermediate with substrate; via pyruvic acid in the catalytic mechanism. Pyruvic acid (Ser); by autocatalysis is present on serine 71. The Proton donor; for catalytic activity role is filled by cysteine 85. Catalysis depends on proton acceptor; for processing activity residues serine 234 and histidine 247.

This sequence belongs to the eukaryotic AdoMetDC family. Pyruvate serves as cofactor. In terms of processing, is synthesized initially as an inactive proenzyme. Formation of the active enzyme involves a self-maturation process in which the active site pyruvoyl group is generated from an internal serine residue via an autocatalytic post-translational modification. Two non-identical subunits are generated from the proenzyme in this reaction, and the pyruvate is formed at the N-terminus of the alpha chain, which is derived from the carboxyl end of the proenzyme. The post-translation cleavage follows an unusual pathway, termed non-hydrolytic serinolysis, in which the side chain hydroxyl group of the serine supplies its oxygen atom to form the C-terminus of the beta chain, while the remainder of the serine residue undergoes an oxidative deamination to produce ammonia and the pyruvoyl group blocking the N-terminus of the alpha chain.

It catalyses the reaction S-adenosyl-L-methionine + H(+) = S-adenosyl 3-(methylsulfanyl)propylamine + CO2. It participates in amine and polyamine biosynthesis; S-adenosylmethioninamine biosynthesis; S-adenosylmethioninamine from S-adenosyl-L-methionine: step 1/1. In Ipomoea nil (Japanese morning glory), this protein is S-adenosylmethionine decarboxylase proenzyme (SAMDC).